The chain runs to 318 residues: Protein-L-histidine N-pros-methyltransferase (318 aa).

Residues 1 to 18 form the signal peptide; the sequence is MRLLAGWLCLSLASVWLA. Residue Asn35 is glycosylated (N-linked (GlcNAc...) asparagine). 3 residues coordinate S-adenosyl-L-homocysteine: Glu174, Asn210, and Tyr295.

The protein belongs to the METTL9 family.

It is found in the endoplasmic reticulum. The protein localises to the mitochondrion. It carries out the reaction L-histidyl-[protein] + S-adenosyl-L-methionine = N(pros)-methyl-L-histidyl-[protein] + S-adenosyl-L-homocysteine + H(+). In terms of biological role, protein-histidine N-methyltransferase that specifically catalyzes 1-methylhistidine (pros-methylhistidine) methylation of target proteins. Specifically methylates the second His of proteins with a His-x-His (HxH) motif (where 'x' is preferably a small amino acid), while exploiting the first one as a recognition signature. Catalyzes methylation of target proteins such as S100A9, NDUFB3, SLC39A5, SLC39A7, ARMC6 and DNAJB12; 1-methylhistidine modification may affect the binding of zinc and other metals to its target proteins. Constitutes the main methyltransferase for the 1-methylhistidine modification in cell. The sequence is that of Protein-L-histidine N-pros-methyltransferase from Bos taurus (Bovine).